A 125-amino-acid chain; its full sequence is Putative glutaredoxin-C2 (125 aa).

Residues 2–103 enclose the Glutaredoxin domain; that stretch reads AERVARLSSQ…PLLREAGALW (102 aa). Cysteines 22 and 25 form a disulfide.

This sequence belongs to the glutaredoxin family. CC-type subfamily.

It localises to the cytoplasm. In terms of biological role, has a glutathione-disulfide oxidoreductase activity in the presence of NADPH and glutathione reductase. Reduces low molecular weight disulfides and proteins. The sequence is that of Putative glutaredoxin-C2 (GRXC2) from Oryza sativa subsp. japonica (Rice).